Consider the following 211-residue polypeptide: Protein-L-isoaspartate O-methyltransferase (211 aa).

Residue Ser60 is part of the active site.

It belongs to the methyltransferase superfamily. L-isoaspartyl/D-aspartyl protein methyltransferase family.

The protein localises to the cytoplasm. The enzyme catalyses [protein]-L-isoaspartate + S-adenosyl-L-methionine = [protein]-L-isoaspartate alpha-methyl ester + S-adenosyl-L-homocysteine. Functionally, catalyzes the methyl esterification of L-isoaspartyl residues in peptides and proteins that result from spontaneous decomposition of normal L-aspartyl and L-asparaginyl residues. It plays a role in the repair and/or degradation of damaged proteins. The chain is Protein-L-isoaspartate O-methyltransferase from Alteromonas mediterranea (strain DSM 17117 / CIP 110805 / LMG 28347 / Deep ecotype).